Consider the following 262-residue polypeptide: Ankyrin repeat domain-containing protein 7 (262 aa).

5 ANK repeats span residues 67–96 (KYRTPLHLACANGHRDVVLFLIEQQCKINI), 100–129 (ENKSPLIKAVQCQNEDCATILLNCGADPNL), 133–162 (RYNTALHYAVCGQSFSLVEQLLDYEADLEA), 166–195 (DGYTPLLVAVINNNPKMVKFLLEKGADVNA), and 199–228 (YQRTALILAVSGEPTRLVKLLLQQGVELSC).

The sequence is that of Ankyrin repeat domain-containing protein 7 (ANKRD7) from Macaca fascicularis (Crab-eating macaque).